The primary structure comprises 107 residues: Small ribosomal subunit protein bS16m (107 aa).

Belongs to the bacterial ribosomal protein bS16 family. In terms of assembly, component of the mitochondrial small ribosomal subunit (mt-SSU). Mature N.crassa 74S mitochondrial ribosomes consist of a small (37S) and a large (54S) subunit. The 37S small subunit contains a 16S ribosomal RNA (16S mt-rRNA) and 32 different proteins. The 54S large subunit contains a 23S rRNA (23S mt-rRNA) and 42 different proteins.

The protein localises to the mitochondrion. Functionally, component of the mitochondrial ribosome (mitoribosome), a dedicated translation machinery responsible for the synthesis of mitochondrial genome-encoded proteins, including at least some of the essential transmembrane subunits of the mitochondrial respiratory chain. The mitoribosomes are attached to the mitochondrial inner membrane and translation products are cotranslationally integrated into the membrane. In Neurospora crassa (strain ATCC 24698 / 74-OR23-1A / CBS 708.71 / DSM 1257 / FGSC 987), this protein is Small ribosomal subunit protein bS16m (cyt-21).